Here is a 705-residue protein sequence, read N- to C-terminus: 1,4-alpha-glucan branching enzyme GlgB (705 aa).

Residue D309 is the Nucleophile of the active site. E360 functions as the Proton donor in the catalytic mechanism. The tract at residues 654-705 (VQVERAADPRPNEQQRLVAETPAHEGGRSAPADAAESAEQKPDDEQKGGKKA) is disordered. The segment covering 691-705 (AEQKPDDEQKGGKKA) has biased composition (basic and acidic residues).

Belongs to the glycosyl hydrolase 13 family. GlgB subfamily. As to quaternary structure, monomer.

It carries out the reaction Transfers a segment of a (1-&gt;4)-alpha-D-glucan chain to a primary hydroxy group in a similar glucan chain.. It functions in the pathway glycan biosynthesis; glycogen biosynthesis. In terms of biological role, catalyzes the formation of the alpha-1,6-glucosidic linkages in glycogen by scission of a 1,4-alpha-linked oligosaccharide from growing alpha-1,4-glucan chains and the subsequent attachment of the oligosaccharide to the alpha-1,6 position. In Deinococcus radiodurans (strain ATCC 13939 / DSM 20539 / JCM 16871 / CCUG 27074 / LMG 4051 / NBRC 15346 / NCIMB 9279 / VKM B-1422 / R1), this protein is 1,4-alpha-glucan branching enzyme GlgB.